The chain runs to 512 residues: 2,3-bisphosphoglycerate-independent phosphoglycerate mutase (512 aa).

Asp-11 and Ser-61 together coordinate Mn(2+). Ser-61 serves as the catalytic Phosphoserine intermediate. Residues His-122, 152 to 153, Arg-184, Arg-190, 259 to 262, and Lys-332 contribute to the substrate site; these read RD and RADR. The Mn(2+) site is built by Asp-399, His-403, Asp-440, His-441, and His-459.

It belongs to the BPG-independent phosphoglycerate mutase family. In terms of assembly, monomer. Requires Mn(2+) as cofactor.

The catalysed reaction is (2R)-2-phosphoglycerate = (2R)-3-phosphoglycerate. It participates in carbohydrate degradation; glycolysis; pyruvate from D-glyceraldehyde 3-phosphate: step 3/5. In terms of biological role, catalyzes the interconversion of 2-phosphoglycerate and 3-phosphoglycerate. In Francisella tularensis subsp. novicida (strain U112), this protein is 2,3-bisphosphoglycerate-independent phosphoglycerate mutase.